The primary structure comprises 87 residues: Kappa-5-bungarotoxin (87 aa).

A signal peptide spans 1–21 (MKTLLLTLVVVTIVCLDLGYT). 5 cysteine pairs are disulfide-bonded: Cys-24–Cys-42, Cys-35–Cys-63, Cys-48–Cys-52, Cys-67–Cys-79, and Cys-80–Cys-85.

Belongs to the three-finger toxin family. Long-chain subfamily. Kappa-neurotoxin sub-subfamily. In terms of assembly, homo- and heterodimer; non-covalently linked. As to expression, expressed by the venom gland.

The protein resides in the secreted. In terms of biological role, postsynaptic neurotoxin that binds and inhibits neuronal nicotinic acetylcholine receptors (nAChR) with high affinity (IC(50)&lt;100 nM). Is a selective, and slowly reversible antagonist of alpha-3/CHRNA3-containing and some alpha-4/CHRNA4-containing AChRs. The polypeptide is Kappa-5-bungarotoxin (Bungarus multicinctus (Many-banded krait)).